Here is a 198-residue protein sequence, read N- to C-terminus: Nucleoside triphosphate pyrophosphatase (198 aa).

Catalysis depends on Asp-72, which acts as the Proton acceptor.

Belongs to the Maf family. Requires a divalent metal cation as cofactor.

It localises to the cytoplasm. The catalysed reaction is a ribonucleoside 5'-triphosphate + H2O = a ribonucleoside 5'-phosphate + diphosphate + H(+). It catalyses the reaction a 2'-deoxyribonucleoside 5'-triphosphate + H2O = a 2'-deoxyribonucleoside 5'-phosphate + diphosphate + H(+). In terms of biological role, nucleoside triphosphate pyrophosphatase. May have a dual role in cell division arrest and in preventing the incorporation of modified nucleotides into cellular nucleic acids. In Acinetobacter baylyi (strain ATCC 33305 / BD413 / ADP1), this protein is Nucleoside triphosphate pyrophosphatase.